The chain runs to 274 residues: MITFPNAKINLGLSITEKRPDGYHNLETVFYPVALEDALEIRTSPEADKKFSLHQYGMEISGNPEDNLVVKAYLLLDKEFHLCPIEIHLYKHIPSGAGLGGGSSDAAFMLKLLNEHFQLNLSEDQLEIYAATLGADCAFFIRNAPTFAEGVGNIFSPIPLSLKGYQILIIKPDVFVSTREAFANIHPHHPEYSIKEAIKRPVNEWKEILINDFEDSVFPQHPVIGEIKAELYRQGAVYASMSGSGSSVYGLFEPEGTLPETDWGTNVFCFKGRL.

Lys8 is a catalytic residue. 94–104 (PSGAGLGGGSS) contacts ATP. Asp136 is an active-site residue.

It belongs to the GHMP kinase family. IspE subfamily.

It carries out the reaction 4-CDP-2-C-methyl-D-erythritol + ATP = 4-CDP-2-C-methyl-D-erythritol 2-phosphate + ADP + H(+). It participates in isoprenoid biosynthesis; isopentenyl diphosphate biosynthesis via DXP pathway; isopentenyl diphosphate from 1-deoxy-D-xylulose 5-phosphate: step 3/6. In terms of biological role, catalyzes the phosphorylation of the position 2 hydroxy group of 4-diphosphocytidyl-2C-methyl-D-erythritol. This chain is 4-diphosphocytidyl-2-C-methyl-D-erythritol kinase, found in Bacteroides thetaiotaomicron (strain ATCC 29148 / DSM 2079 / JCM 5827 / CCUG 10774 / NCTC 10582 / VPI-5482 / E50).